The chain runs to 263 residues: MALQTPSFLLPAAVVVLMVLSSPGTEGRDSPRDFVYQFKGLCYYTNGTQRIRDVIRYIYNQEEYLRYDSDVGEYRALTELGRPSAEYFNKQYLEQTRAELDTVCRHNYEGSEVRTSLRRLEQPNVAISLSRTEALNHHNLLVCSVTDFYPAQIKVRWFRNGQEETAGVVSTQLIRNGDWTFQILVMLEMTPQRGEVYICHVDHPSLESPVTVEWRAQSESAQSKMLSGIGGFVLGVIFLGLGLFIRHKRQKGPRGPPPAGLLQ.

The N-terminal stretch at 1 to 27 (MALQTPSFLLPAAVVVLMVLSSPGTEG) is a signal peptide. The tract at residues 28 to 120 (RDSPRDFVYQ…SEVRTSLRRL (93 aa)) is beta-1. The Extracellular portion of the chain corresponds to 28 to 224 (RDSPRDFVYQ…RAQSESAQSK (197 aa)). Disulfide bonds link cysteine 42–cysteine 104 and cysteine 143–cysteine 199. Asparagine 46 is a glycosylation site (N-linked (GlcNAc...) asparagine). Residues 121–214 (EQPNVAISLS…SLESPVTVEW (94 aa)) are beta-2. Residues 123–211 (PNVAISLSRT…DHPSLESPVT (89 aa)) enclose the Ig-like C1-type domain. The connecting peptide stretch occupies residues 215–224 (RAQSESAQSK). Residues 225–245 (MLSGIGGFVLGVIFLGLGLFI) form a helical membrane-spanning segment. At 246 to 263 (RHKRQKGPRGPPPAGLLQ) the chain is on the cytoplasmic side. Residue lysine 251 forms a Glycyl lysine isopeptide (Lys-Gly) (interchain with G-Cter in ubiquitin) linkage.

Belongs to the MHC class II family.

Its subcellular location is the membrane. Involved in the presentation of foreign antigens to the immune system. This is Rano class II histocompatibility antigen, B-1 beta chain (RT1-Bb) from Rattus norvegicus (Rat).